The following is a 248-amino-acid chain: uncharacterized protein (248 aa).

An N-terminal signal peptide occupies residues 1–26 (MVAPRISPKIVLVGFALFAIISASLA).

This is an uncharacterized protein from Acanthamoeba polyphaga mimivirus (APMV).